We begin with the raw amino-acid sequence, 178 residues long: CDP-archaeol synthase (178 aa).

5 helical membrane-spanning segments follow: residues 3–23 (IIYLVINSFIFILPAYVANAT), 55–75 (TFFGLFCGTITAILEGIIFNL), 91–111 (GIVGLLLSAGALFGDAIGSFI), 125–145 (ILDQLGFIVFALLFVYPFAPV), and 149–169 (MGIFLLVITPMIHLSANIIAY).

It belongs to the CDP-archaeol synthase family. It depends on Mg(2+) as a cofactor.

The protein localises to the cell membrane. It carries out the reaction 2,3-bis-O-(geranylgeranyl)-sn-glycerol 1-phosphate + CTP + H(+) = CDP-2,3-bis-O-(geranylgeranyl)-sn-glycerol + diphosphate. It participates in membrane lipid metabolism; glycerophospholipid metabolism. Catalyzes the formation of CDP-2,3-bis-(O-geranylgeranyl)-sn-glycerol (CDP-archaeol) from 2,3-bis-(O-geranylgeranyl)-sn-glycerol 1-phosphate (DGGGP) and CTP. This reaction is the third ether-bond-formation step in the biosynthesis of archaeal membrane lipids. In Methanococcus aeolicus (strain ATCC BAA-1280 / DSM 17508 / OCM 812 / Nankai-3), this protein is CDP-archaeol synthase.